Reading from the N-terminus, the 198-residue chain is Cyclin-dependent kinase inhibitor 1B (198 aa).

Residues 1–11 (MSNVRVSNGSP) show a composition bias toward polar residues. The disordered stretch occupies residues 1-34 (MSNVRVSNGSPSLERMDARQAEHPKPSACRNLFG). Ser-10 bears the Phosphoserine; by UHMK1 mark. Positions 14–25 (ERMDARQAEHPK) are enriched in basic and acidic residues. Residues 51 to 91 (DMEEASQRKWNFDFQNHKPLEGKYEWQEVEKGSLPEFYYRP) are interaction with CDK2. Phosphotyrosine; by SRC is present on Tyr-74. A disordered region spans residues 85-198 (PEFYYRPPRP…KKPGLRRRQT (114 aa)). Tyr-88 bears the Phosphotyrosine; by ABL, LYN, SRC and JAK2 mark. At Tyr-89 the chain carries Phosphotyrosine. Basic and acidic residues predominate over residues 126 to 137 (EDTHLVDPKTDP). The Nuclear localization signal signature appears at 153 to 169 (KRPATDDSSTQNKRANR). At Thr-157 the chain carries Phosphothreonine; by CaMK1, PKB/AKT1 and PIM1. Phosphothreonine is present on Thr-170. Positions 175–186 (SDGSPNAGSVEQ) are enriched in polar residues. Residue Thr-187 is modified to Phosphothreonine; by PKB/AKT1, CDK1 and CDK2. A Phosphothreonine; by CaMK1, PKB/AKT1, RPS6KA1, RPS6KA3 and PIM1 modification is found at Thr-198.

Belongs to the CDI family. Forms a ternary complex composed of CCNE1, CDK2 and CDKN1B. Interacts directly with CCNE1; the interaction is inhibited by CDK2-dependent phosphorylation on Thr-187. Interacts with COPS5, subunit of the COP9 signalosome complex; the interaction leads to CDKN1B degradation. Interacts with NUP50; the interaction leads to nuclear import and degradation of phosphorylated CDKN1B. Interacts with CCND1 and SNX6. Interacts (Thr-198-phosphorylated form) with 14-3-3 proteins, binds strongly YWHAQ, weakly YWHAE and YWHAH, but not YWHAB nor YWHAZ; the interaction with YWHAQ results in translocation to the cytoplasm. Interacts with AKT1 and LYN; the interactions lead to cytoplasmic mislocation, phosphorylation of CDKN1B and inhibition of cell cycle arrest. Forms a ternary complex with CCNA2 and CDK2; CDKN1B inhibits the kinase activity of CDK2 through conformational rearrangements. Interacts (unphosphorylated form) with CDK2. Forms a complex with CDK2 and SPDYA, but does not directly interact with SPDYA. Forms a ternary complex composed of cyclin D, CDK4 and CDKN1B. Interacts (phosphorylated on Tyr-88 and Tyr-89) with CDK4; the interaction is required for cyclin D and CDK4 complex assembly, induces nuclear translocation and activates the CDK4 kinase activity. Interacts with GRB2. Interacts with PIM1. Identified in a complex with SKP1, SKP2 and CKS1B. Interacts with UHMK1; the interaction leads to cytoplasmic mislocation, phosphorylation of CDKN1B and inhibition of cell cycle arrest. Also interacts with CDK1. Dephosphorylated on Thr-187 by PPM1H, leading to CDKN1B stability. Interacts with HSPA8; the interaction may be associated with susceptibility to ubiquitination. Phosphorylated; phosphorylation occurs on serine, threonine and tyrosine residues. Phosphorylation on Ser-10 is the major site of phosphorylation in resting cells, takes place at the G(0)-G(1) phase and leads to protein stability. Phosphorylation on other sites is greatly enhanced by mitogens, growth factors, cMYC and in certain cancer cell lines. The phosphorylated form found in the cytoplasm is inactivate. Phosphorylation on Thr-198 is required for interaction with 14-3-3 proteins. Phosphorylation on Thr-187, by CDK1 and CDK2 leads to protein ubiquitination and proteasomal degradation. Tyrosine phosphorylation promotes this process. Phosphorylation by PKB/AKT1 can be suppressed by LY294002, an inhibitor of the catalytic subunit of PI3K. Phosphorylation on Tyr-88 and Tyr-89 has no effect on binding CDK2, but is required for binding CDK4. Dephosphorylated on tyrosine residues by G-CSF. In terms of processing, ubiquitinated; in the cytoplasm by the KPC complex (composed of RNF123/KPC1 and UBAC1/KPC2) and, in the nucleus, by SCF(SKP2). The latter requires prior phosphorylation on Thr-187. Ubiquitinated; by a TRIM21-containing SCF(SKP2)-like complex; leads to its degradation. Post-translationally, subject to degradation in the lysosome. Interaction with SNX6 promotes lysosomal degradation. Expressed in kidney (at protein level). Expressed in all tissues tested. Highest levels in skeletal muscle, lowest in liver and kidney.

The protein localises to the nucleus. Its subcellular location is the cytoplasm. It localises to the endosome. Important regulator of cell cycle progression. Inhibits the kinase activity of CDK2 bound to cyclin A, but has little inhibitory activity on CDK2 bound to SPDYA. Involved in G1 arrest. Potent inhibitor of cyclin E- and cyclin A-CDK2 complexes. Forms a complex with cyclin type D-CDK4 complexes and is involved in the assembly, stability, and modulation of CCND1-CDK4 complex activation. Acts either as an inhibitor or an activator of cyclin type D-CDK4 complexes depending on its phosphorylation state and/or stoichometry. The polypeptide is Cyclin-dependent kinase inhibitor 1B (Homo sapiens (Human)).